Reading from the N-terminus, the 705-residue chain is DNA ligase (705 aa).

Residues 42-46, 91-92, and Glu125 each bind NAD(+); these read DADFD and SL. Catalysis depends on Lys127, which acts as the N6-AMP-lysine intermediate. Positions 148, 183, 299, and 323 each coordinate NAD(+). 4 residues coordinate Zn(2+): Cys428, Cys431, Cys446, and Cys452. Residues 626–705 form the BRCT domain; it reads TDGSPVAGKT…DGWLALIEGL (80 aa).

Belongs to the NAD-dependent DNA ligase family. LigA subfamily. Mg(2+) is required as a cofactor. The cofactor is Mn(2+).

It catalyses the reaction NAD(+) + (deoxyribonucleotide)n-3'-hydroxyl + 5'-phospho-(deoxyribonucleotide)m = (deoxyribonucleotide)n+m + AMP + beta-nicotinamide D-nucleotide.. Functionally, DNA ligase that catalyzes the formation of phosphodiester linkages between 5'-phosphoryl and 3'-hydroxyl groups in double-stranded DNA using NAD as a coenzyme and as the energy source for the reaction. It is essential for DNA replication and repair of damaged DNA. This is DNA ligase from Roseobacter denitrificans (strain ATCC 33942 / OCh 114) (Erythrobacter sp. (strain OCh 114)).